The chain runs to 231 residues: MKFGISQSFPCSYLPDEQETLLVYAEETEHNTYYEMLMAAGFRRSGAQVYRPHCGACTACQAIRVPVADFAPSKGQKRILKRNSDITVVLSEQDKAHYYSLYEKYINTRHQDGSMYPATPEQYASFAHGDWLDPLYIELHLSGELVGIAVTDALENALSAVYTFFEPSLAERSLGTFAVLQQISIAKRLNKQHLYLGYQIDNCQKMQYKRNFLPHERFIEQKWQLISKKDW.

The protein belongs to the R-transferase family. Bpt subfamily.

The protein resides in the cytoplasm. The enzyme catalyses N-terminal L-glutamyl-[protein] + L-leucyl-tRNA(Leu) = N-terminal L-leucyl-L-glutamyl-[protein] + tRNA(Leu) + H(+). The catalysed reaction is N-terminal L-aspartyl-[protein] + L-leucyl-tRNA(Leu) = N-terminal L-leucyl-L-aspartyl-[protein] + tRNA(Leu) + H(+). In terms of biological role, functions in the N-end rule pathway of protein degradation where it conjugates Leu from its aminoacyl-tRNA to the N-termini of proteins containing an N-terminal aspartate or glutamate. The protein is Aspartate/glutamate leucyltransferase of Pseudoalteromonas atlantica (strain T6c / ATCC BAA-1087).